We begin with the raw amino-acid sequence, 196 residues long: 7-methyl-GTP pyrophosphatase (196 aa).

Asp-69 acts as the Proton acceptor in catalysis.

Belongs to the Maf family. YceF subfamily. A divalent metal cation is required as a cofactor.

The protein resides in the cytoplasm. It carries out the reaction N(7)-methyl-GTP + H2O = N(7)-methyl-GMP + diphosphate + H(+). Functionally, nucleoside triphosphate pyrophosphatase that hydrolyzes 7-methyl-GTP (m(7)GTP). May have a dual role in cell division arrest and in preventing the incorporation of modified nucleotides into cellular nucleic acids. The polypeptide is 7-methyl-GTP pyrophosphatase (Photorhabdus laumondii subsp. laumondii (strain DSM 15139 / CIP 105565 / TT01) (Photorhabdus luminescens subsp. laumondii)).